The primary structure comprises 51 residues: Large ribosomal subunit protein eL39 (51 aa).

This sequence belongs to the eukaryotic ribosomal protein eL39 family.

The chain is Large ribosomal subunit protein eL39 (rpl39e) from Pyrococcus abyssi (strain GE5 / Orsay).